The sequence spans 959 residues: Probable LRR receptor-like serine/threonine-protein kinase At5g37450 (959 aa).

An N-terminal signal peptide occupies residues 1–24 (MKEMMGVVGIILVVSSCCLSLLDA). The Extracellular segment spans residues 25-565 (QEITHPTDVS…SGMSIGVSVG (541 aa)). N62, N88, N102, and N123 each carry an N-linked (GlcNAc...) asparagine glycan. 9 LRR repeats span residues 79–100 (VKEL…LGLL), 101–124 (SNLT…LGNL), 125–148 (THLI…LGSL), 149–172 (SNLL…LANL), 173–198 (KKLK…TLTN), 200–220 (LHFL…LAQM), 221–244 (PSLR…SYGS), 246–268 (PNLV…LSKS), and 269–292 (LVLY…KFSA). N182 is a glycosylation site (N-linked (GlcNAc...) asparagine). 6 N-linked (GlcNAc...) asparagine glycosylation sites follow: N293, N311, N327, N358, N369, and N510. LRR repeat units lie at residues 294-314 (ITTI…NFSG), 315-338 (LPRL…IWEN), and 341-366 (LKAE…LLNP). A helical membrane pass occupies residues 566–586 (IIIGAIAFFLVLSSLALVFFI). The Cytoplasmic portion of the chain corresponds to 587-959 (KRSKRKRKTR…SGVIPSIAPR (373 aa)). A Protein kinase domain is found at 631–906 (FSDLSQIGRG…RELENIYGLI (276 aa)). Residues 637–645 (IGRGGYGKV) and K659 contribute to the ATP site. The active-site Proton acceptor is the D755.

It belongs to the protein kinase superfamily. Ser/Thr protein kinase family.

Its subcellular location is the membrane. The catalysed reaction is L-seryl-[protein] + ATP = O-phospho-L-seryl-[protein] + ADP + H(+). It carries out the reaction L-threonyl-[protein] + ATP = O-phospho-L-threonyl-[protein] + ADP + H(+). The protein is Probable LRR receptor-like serine/threonine-protein kinase At5g37450 of Arabidopsis thaliana (Mouse-ear cress).